The sequence spans 129 residues: uncharacterized protein (129 aa).

Residues 3–109 enclose the HIT domain; it reads IFCKIINGEI…IPRYEGDGEV (107 aa). The Histidine triad motif motif lies at 94–98; the sequence is HVHFH.

This is an uncharacterized protein from Methanocaldococcus jannaschii (strain ATCC 43067 / DSM 2661 / JAL-1 / JCM 10045 / NBRC 100440) (Methanococcus jannaschii).